A 345-amino-acid polypeptide reads, in one-letter code: Myb/SANT-like DNA-binding domain-containing protein 4 (345 aa).

Residues Leu-4–Arg-77 form the Myb-like domain. Residue Lys-9 forms a Glycyl lysine isopeptide (Lys-Gly) (interchain with G-Cter in SUMO2) linkage. A Phosphoserine modification is found at Ser-106. Residues Lys-114 and Lys-142 each participate in a glycyl lysine isopeptide (Lys-Gly) (interchain with G-Cter in SUMO2) cross-link. A disordered region spans residues Val-141–Asn-175. A Phosphothreonine modification is found at Thr-188. The stretch at His-202–Leu-344 forms a coiled coil. Residues Lys-237, Lys-254, and Lys-273 each participate in a glycyl lysine isopeptide (Lys-Gly) (interchain with G-Cter in SUMO2) cross-link.

In Rattus norvegicus (Rat), this protein is Myb/SANT-like DNA-binding domain-containing protein 4 (Msantd4).